A 93-amino-acid polypeptide reads, in one-letter code: UPF0058 protein AF_0738 (93 aa).

Belongs to the UPF0058 family.

This chain is UPF0058 protein AF_0738, found in Archaeoglobus fulgidus (strain ATCC 49558 / DSM 4304 / JCM 9628 / NBRC 100126 / VC-16).